A 96-amino-acid chain; its full sequence is MLRQYEVMYILHPELDAEKTESIIERFKGMIEQEGGEVTKIDRWGKRRFAYEIKKLREGYYVVMNFKAKAETAQELDRLLRISDDVVRHIVIREDK.

This sequence belongs to the bacterial ribosomal protein bS6 family.

Its function is as follows. Binds together with bS18 to 16S ribosomal RNA. The sequence is that of Small ribosomal subunit protein bS6 from Carboxydothermus hydrogenoformans (strain ATCC BAA-161 / DSM 6008 / Z-2901).